Reading from the N-terminus, the 180-residue chain is Large ribosomal subunit protein uL15 (180 aa).

The segment at 1–62 (MKKERLEQAA…KTAGRGSKGQ (62 aa)) is disordered. Positions 35–44 (GAKKEKKRVG) are enriched in basic residues.

The protein belongs to the universal ribosomal protein uL15 family. In terms of assembly, part of the 50S ribosomal subunit.

Its function is as follows. Binds to the 23S rRNA. The protein is Large ribosomal subunit protein uL15 of Leptospira borgpetersenii serovar Hardjo-bovis (strain JB197).